A 20-amino-acid polypeptide reads, in one-letter code: Catechol 1,2-dioxygenase (20 aa).

Belongs to the intradiol ring-cleavage dioxygenase family. Homodimer which dissociates into active monomeric subunits at high ionic strengths. The cofactor is Fe(3+).

It carries out the reaction catechol + O2 = cis,cis-muconate + 2 H(+). Its pathway is aromatic compound metabolism; beta-ketoadipate pathway; 5-oxo-4,5-dihydro-2-furylacetate from catechol: step 1/3. The chain is Catechol 1,2-dioxygenase from Acinetobacter radioresistens.